The following is a 292-amino-acid chain: Homoserine kinase (292 aa).

84–94 (PLSRGLGSSSA) lines the ATP pocket.

The protein belongs to the GHMP kinase family. Homoserine kinase subfamily.

Its subcellular location is the cytoplasm. It catalyses the reaction L-homoserine + ATP = O-phospho-L-homoserine + ADP + H(+). It functions in the pathway amino-acid biosynthesis; L-threonine biosynthesis; L-threonine from L-aspartate: step 4/5. Functionally, catalyzes the ATP-dependent phosphorylation of L-homoserine to L-homoserine phosphate. This is Homoserine kinase from Campylobacter jejuni subsp. jejuni serotype O:23/36 (strain 81-176).